We begin with the raw amino-acid sequence, 257 residues long: Distal membrane-arm assembly complex protein 2 (257 aa).

Serine 253 is subject to Phosphoserine.

It belongs to the ATP synthase subunit s family. Interacts with incompletely assembled mitochondrial NADH:ubiquinone oxidoreductase complex (complex I).

It localises to the mitochondrion. In terms of biological role, required for the assembly of the mitochondrial NADH:ubiquinone oxidoreductase complex (complex I). Involved in the assembly of the distal region of complex I. This is Distal membrane-arm assembly complex protein 2 from Homo sapiens (Human).